A 250-amino-acid polypeptide reads, in one-letter code: Phosphonates import ATP-binding protein PhnC (250 aa).

The ABC transporter domain occupies 2 to 247 (IVFNNVNKVW…KLDAQAMKKI (246 aa)). 35 to 42 (GLSGAGKT) contacts ATP.

It belongs to the ABC transporter superfamily. Phosphonates importer (TC 3.A.1.9.1) family. The complex is composed of two ATP-binding proteins (PhnC), two transmembrane proteins (PhnE) and a solute-binding protein (PhnD).

Its subcellular location is the cell membrane. It catalyses the reaction phosphonate(out) + ATP + H2O = phosphonate(in) + ADP + phosphate + H(+). Functionally, part of the ABC transporter complex PhnCDE involved in phosphonates import. Responsible for energy coupling to the transport system. The polypeptide is Phosphonates import ATP-binding protein PhnC (Mycoplasma mycoides subsp. mycoides SC (strain CCUG 32753 / NCTC 10114 / PG1)).